Reading from the N-terminus, the 124-residue chain is Large ribosomal subunit protein eL22z (124 aa).

The protein belongs to the eukaryotic ribosomal protein eL22 family.

This chain is Large ribosomal subunit protein eL22z (RPL22B), found in Arabidopsis thaliana (Mouse-ear cress).